A 420-amino-acid polypeptide reads, in one-letter code: Histidine--tRNA ligase (420 aa).

This sequence belongs to the class-II aminoacyl-tRNA synthetase family. Homodimer.

It is found in the cytoplasm. It carries out the reaction tRNA(His) + L-histidine + ATP = L-histidyl-tRNA(His) + AMP + diphosphate + H(+). In Staphylococcus aureus (strain Mu3 / ATCC 700698), this protein is Histidine--tRNA ligase.